The following is a 704-amino-acid chain: Glycine--tRNA ligase beta subunit (704 aa).

It belongs to the class-II aminoacyl-tRNA synthetase family. Tetramer of two alpha and two beta subunits.

It localises to the cytoplasm. The enzyme catalyses tRNA(Gly) + glycine + ATP = glycyl-tRNA(Gly) + AMP + diphosphate. This is Glycine--tRNA ligase beta subunit from Rhizobium etli (strain ATCC 51251 / DSM 11541 / JCM 21823 / NBRC 15573 / CFN 42).